The chain runs to 199 residues: Cytosine-containing mismatch-binding protein 1 (199 aa).

Residues 123–197 (PKKPSSAFIL…QYDKFMKEAG (75 aa)) constitute a DNA-binding region (HMG box).

As to quaternary structure, monomer.

It localises to the nucleus. Binds to cytosines in base mismatches and opposite chemically altered guanines. May be involved in repair of DNA damage. In Schizosaccharomyces pombe (strain 972 / ATCC 24843) (Fission yeast), this protein is Cytosine-containing mismatch-binding protein 1.